Consider the following 367-residue polypeptide: Pyrimidine monooxygenase RutA (367 aa).

FMN contacts are provided by residues 50–51 (IK), Asn116, Glu125, 141–142 (RY), and Ser191.

Belongs to the NtaA/SnaA/DszA monooxygenase family. RutA subfamily.

The enzyme catalyses uracil + FMNH2 + NADH + O2 = (Z)-3-ureidoacrylate + FMN + NAD(+) + H2O + H(+). The catalysed reaction is thymine + FMNH2 + NADH + O2 = (Z)-2-methylureidoacrylate + FMN + NAD(+) + H2O + H(+). Catalyzes the pyrimidine ring opening between N-3 and C-4 by an unusual flavin hydroperoxide-catalyzed mechanism, adding oxygen atoms in the process to yield ureidoacrylate peracid, that immediately reacts with FMN forming ureidoacrylate and FMN-N(5)-oxide. The FMN-N(5)-oxide reacts spontaneously with NADH to produce FMN. Requires the flavin reductase RutF to regenerate FMN in vivo. The polypeptide is Pyrimidine monooxygenase RutA (Allorhizobium ampelinum (strain ATCC BAA-846 / DSM 112012 / S4) (Agrobacterium vitis (strain S4))).